Reading from the N-terminus, the 677-residue chain is Methionine--tRNA ligase (677 aa).

Positions 15–25 (PYANGSIHLGH) match the 'HIGH' region motif. Cys-146, Cys-149, Cys-159, and Cys-162 together coordinate Zn(2+). Residues 333–337 (KMSKS) carry the 'KMSKS' region motif. Lys-336 is a binding site for ATP. The tRNA-binding domain maps to 575 to 677 (DFAKVDLRVA…AGAKPGHQVK (103 aa)).

The protein belongs to the class-I aminoacyl-tRNA synthetase family. MetG type 1 subfamily. Homodimer. Zn(2+) serves as cofactor.

It is found in the cytoplasm. It catalyses the reaction tRNA(Met) + L-methionine + ATP = L-methionyl-tRNA(Met) + AMP + diphosphate. Is required not only for elongation of protein synthesis but also for the initiation of all mRNA translation through initiator tRNA(fMet) aminoacylation. This is Methionine--tRNA ligase from Escherichia coli (strain SE11).